A 238-amino-acid polypeptide reads, in one-letter code: Sugar fermentation stimulation protein homolog (238 aa).

Belongs to the SfsA family.

This chain is Sugar fermentation stimulation protein homolog, found in Klebsiella pneumoniae subsp. pneumoniae (strain ATCC 700721 / MGH 78578).